A 391-amino-acid polypeptide reads, in one-letter code: Phosphoglycerate kinase (391 aa).

Residues 21 to 23 (DLN), Arg36, 59 to 62 (HLGR), Arg113, and Arg146 each bind substrate. Residues Lys197, Glu319, and 345 to 348 (GGDT) each bind ATP.

This sequence belongs to the phosphoglycerate kinase family. In terms of assembly, monomer.

The protein localises to the cytoplasm. The catalysed reaction is (2R)-3-phosphoglycerate + ATP = (2R)-3-phospho-glyceroyl phosphate + ADP. It participates in carbohydrate degradation; glycolysis; pyruvate from D-glyceraldehyde 3-phosphate: step 2/5. The protein is Phosphoglycerate kinase of Shewanella sp. (strain MR-7).